A 695-amino-acid chain; its full sequence is Polyribonucleotide nucleotidyltransferase (695 aa).

The Mg(2+) site is built by Asp-486 and Asp-492. The KH domain occupies 553-612 (PRIETMQINTSKIATVIGPGGKQIRQIIERSGAQVDINDDGVINIAASTQESINKAKELI). Residues 622 to 690 (GKVYNGRVTS…EKGQLKLSHK (69 aa)) enclose the S1 motif domain.

This sequence belongs to the polyribonucleotide nucleotidyltransferase family. It depends on Mg(2+) as a cofactor.

Its subcellular location is the cytoplasm. It carries out the reaction RNA(n+1) + phosphate = RNA(n) + a ribonucleoside 5'-diphosphate. Functionally, involved in mRNA degradation. Catalyzes the phosphorolysis of single-stranded polyribonucleotides processively in the 3'- to 5'-direction. The protein is Polyribonucleotide nucleotidyltransferase of Chlamydia trachomatis serovar L2 (strain ATCC VR-902B / DSM 19102 / 434/Bu).